The following is a 331-amino-acid chain: MKYHRPRRGSLAFSPRKRAKSIVPRIRAWPECDRVRMQGFAGYKAGMTHVVMIDDRKNSPTYGEEVVVPVTVIETPPMKVAAVRVYKKTQYGMQIAAEVWSNNLDDFLDRRLNLPKKEPDVEKLKAAVENGASEVRVVTYTQPYLITGVPKKVPDVMEHRIGGNVEEALDYAISKLGKEISVSEVFDEGAIIDVIAVTKGKGFQGPVKRWGVITLDAKHARSSKHRRVGNLGPWNPHHVRWTVPQAGQMGFHQRTEYNKRLIKIGENGEEITPKGGFLHYGVIRTQYVLVTGSVPGPVKRLIRMRDAIRPPKAHFDGVNIVYVSTTSKQGR.

The protein belongs to the universal ribosomal protein uL3 family. In terms of assembly, part of the 50S ribosomal subunit. Forms a cluster with proteins L14 and L24e.

Functionally, one of the primary rRNA binding proteins, it binds directly near the 3'-end of the 23S rRNA, where it nucleates assembly of the 50S subunit. The polypeptide is Large ribosomal subunit protein uL3 (Archaeoglobus fulgidus (strain ATCC 49558 / DSM 4304 / JCM 9628 / NBRC 100126 / VC-16)).